The primary structure comprises 268 residues: Ribonuclease P protein subunit p30 (268 aa).

The residue at position 2 (Ala-2) is an N-acetylalanine. Phosphoserine is present on Ser-251.

This sequence belongs to the eukaryotic/archaeal RNase P protein component 3 family. In terms of assembly, component of nuclear RNase P and RNase MRP ribonucleoproteins. RNase P consists of a catalytic RNA moiety and about 10 protein subunits; POP1, POP4, POP5, POP7, RPP14, RPP21, RPP25, RPP30, RPP38 and RPP40. Within the RNase P complex, POP1, POP7 and RPP25 form the 'finger' subcomplex, POP5, RPP14, RPP40 and homodimeric RPP30 form the 'palm' subcomplex, and RPP21, POP4 and RPP38 form the 'wrist' subcomplex. All subunits of the RNase P complex interact with the catalytic RNA. Several subunits of RNase P are also part of the RNase MRP complex. RNase MRP consists of a catalytic RNA moiety and about 8 protein subunits; POP1, POP7, RPP25, RPP30, RPP38, RPP40 and possibly also POP4 and POP5.

The protein localises to the nucleus. It is found in the nucleolus. Its function is as follows. Component of ribonuclease P, a ribonucleoprotein complex that generates mature tRNA molecules by cleaving their 5'-ends. Also a component of the MRP ribonuclease complex, which cleaves pre-rRNA sequences. The chain is Ribonuclease P protein subunit p30 (RPP30) from Bos taurus (Bovine).